We begin with the raw amino-acid sequence, 1756 residues long: Transposon Ty1-PR2 Gag-Pol polyprotein (1756 aa).

Composition is skewed to polar residues over residues 1 to 10, 48 to 60, and 127 to 152; these read MESQQLSNYP, TKAN…TPAS, and QSQF…GNTF. 3 disordered regions span residues 1–93, 126–173, and 352–421; these read MESQ…MMTQ, PQSQ…RPPP, and GSRN…SKST. Residues 153-165 show a composition bias toward low complexity; sequence TDSSSADSDMTST. The interval 299–401 is RNA-binding; the sequence is NNGIHINNKV…NSKSKTARAH (103 aa). Residues 402–418 are compositionally biased toward low complexity; that stretch reads NVSTSNNSPSTDNDSIS. Asp-461 functions as the For protease activity; shared with dimeric partner in the catalytic mechanism. The integrase-type zinc finger-like stretch occupies residues 583-640; it reads NVHTSESTRKYPYPFIHRMLAHANAQTIRYSLKNNTITYFNESDVDWSSAIDYQCPDC. The 177-residue stretch at 660–836 folds into the Integrase catalytic domain; the sequence is NSYEPFQYLH…AGLDISTLLP (177 aa). Residues Asp-671 and Asp-736 each coordinate Mg(2+). Disordered regions lie at residues 957-1088, 1093-1112, and 1131-1188; these read SKAV…ETEK, RSPS…NIVP, and DLPL…DNET. Low complexity predominate over residues 961-970; sequence SPTDSTPPST. The segment covering 1006–1016 has biased composition (polar residues); that stretch reads STPQISNIEST. A compositionally biased stretch (basic and acidic residues) spans 1039–1054; sequence ESSHASKSKDFRHSDS. 2 stretches are compositionally biased toward polar residues: residues 1055-1083 and 1102-1112; these read YSEN…QISD and PENNSSHNIVP. The Bipartite nuclear localization signal motif lies at 1179-1213; the sequence is KKRSLEDNETEIKVSRDTWNTKNMRSLEPPRSKKR. The Reverse transcriptase Ty1/copia-type domain occupies 1339–1477; it reads NNYYITQLDI…DILGLEIKYQ (139 aa). Mg(2+) contacts are provided by Asp-1347, Asp-1428, Asp-1429, Asp-1611, Glu-1653, and Asp-1686. Residues 1611–1753 form the RNase H Ty1/copia-type domain; it reads DASYGNQPYY…IKTFKLLTNK (143 aa).

In terms of assembly, the capsid protein forms a homotrimer, from which the VLPs are assembled. The protease is a homodimer, whose active site consists of two apposed aspartic acid residues. In terms of processing, initially, virus-like particles (VLPs) are composed of the structural unprocessed proteins Gag and Gag-Pol, and also contain the host initiator methionine tRNA (tRNA(i)-Met) which serves as a primer for minus-strand DNA synthesis, and a dimer of genomic Ty RNA. Processing of the polyproteins occurs within the particle and proceeds by an ordered pathway, called maturation. First, the protease (PR) is released by autocatalytic cleavage of the Gag-Pol polyprotein yielding capsid protein p45 and a Pol-p154 precursor protein. This cleavage is a prerequisite for subsequent processing of Pol-p154 at the remaining sites to release the mature structural and catalytic proteins. Maturation takes place prior to the RT reaction and is required to produce transposition-competent VLPs.

The protein resides in the cytoplasm. Its subcellular location is the nucleus. The catalysed reaction is DNA(n) + a 2'-deoxyribonucleoside 5'-triphosphate = DNA(n+1) + diphosphate. It carries out the reaction Endonucleolytic cleavage to 5'-phosphomonoester.. In terms of biological role, capsid protein (CA) is the structural component of the virus-like particle (VLP), forming the shell that encapsulates the retrotransposons dimeric RNA genome. The particles are assembled from trimer-clustered units and there are holes in the capsid shells that allow for the diffusion of macromolecules. CA also has nucleocapsid-like chaperone activity, promoting primer tRNA(i)-Met annealing to the multipartite primer-binding site (PBS), dimerization of Ty1 RNA and initiation of reverse transcription. Its function is as follows. The aspartyl protease (PR) mediates the proteolytic cleavages of the Gag and Gag-Pol polyproteins after assembly of the VLP. Functionally, reverse transcriptase/ribonuclease H (RT) is a multifunctional enzyme that catalyzes the conversion of the retro-elements RNA genome into dsDNA within the VLP. The enzyme displays a DNA polymerase activity that can copy either DNA or RNA templates, and a ribonuclease H (RNase H) activity that cleaves the RNA strand of RNA-DNA heteroduplexes during plus-strand synthesis and hydrolyzes RNA primers. The conversion leads to a linear dsDNA copy of the retrotransposon that includes long terminal repeats (LTRs) at both ends. Integrase (IN) targets the VLP to the nucleus, where a subparticle preintegration complex (PIC) containing at least integrase and the newly synthesized dsDNA copy of the retrotransposon must transit the nuclear membrane. Once in the nucleus, integrase performs the integration of the dsDNA into the host genome. The chain is Transposon Ty1-PR2 Gag-Pol polyprotein (TY1B-PR2) from Saccharomyces cerevisiae (strain ATCC 204508 / S288c) (Baker's yeast).